A 579-amino-acid chain; its full sequence is Proline--tRNA ligase (579 aa).

Belongs to the class-II aminoacyl-tRNA synthetase family. ProS type 1 subfamily. Homodimer.

It localises to the cytoplasm. It carries out the reaction tRNA(Pro) + L-proline + ATP = L-prolyl-tRNA(Pro) + AMP + diphosphate. Catalyzes the attachment of proline to tRNA(Pro) in a two-step reaction: proline is first activated by ATP to form Pro-AMP and then transferred to the acceptor end of tRNA(Pro). As ProRS can inadvertently accommodate and process non-cognate amino acids such as alanine and cysteine, to avoid such errors it has two additional distinct editing activities against alanine. One activity is designated as 'pretransfer' editing and involves the tRNA(Pro)-independent hydrolysis of activated Ala-AMP. The other activity is designated 'posttransfer' editing and involves deacylation of mischarged Ala-tRNA(Pro). The misacylated Cys-tRNA(Pro) is not edited by ProRS. In Hamiltonella defensa subsp. Acyrthosiphon pisum (strain 5AT), this protein is Proline--tRNA ligase.